Consider the following 307-residue polypeptide: Voltage-dependent anion channel-forming protein alr2987 (307 aa).

4 consecutive transmembrane segments (helical) span residues 19-39 (VIGAIYKRVICCALFGVLVTL), 47-67 (VSQPILGSVIPSIVLGLLLVF), 209-229 (PLAYSIHLKQLLLLYCFLLPF), and 238-258 (WTGLVVGLVSFTLFGIEAIGL).

This sequence belongs to the anion channel-forming bestrophin (TC 1.A.46) family.

Its subcellular location is the cell membrane. This is Voltage-dependent anion channel-forming protein alr2987 from Nostoc sp. (strain PCC 7120 / SAG 25.82 / UTEX 2576).